Here is a 566-residue protein sequence, read N- to C-terminus: MKTIIVLSYFFCLALSQDYSESNNSTATLCLGHHAVPNGTIVKTITDDQIEVTNATELVQSSSTGKICNNPHRILDGRDCTLIDALLGDPHCDVFQDETWDLYVERSSAFSNCYPYDVPDYASLRSLVASSGTLEFITEGFTWTGVTQNGGSNACKRGPASGFFSRLNWLTKSGSTYPVLNVTMPNDDNFDKLYVWGVHHPSTNQEQTDLYVQASGRVTVSTRRSQQTIIPNIGSRPWVRGQSGRISIYWTIVKPGDVLVINSNGNLIAPRGYFKIRTGKSSIMRSDAPIDTCISECITPNGSIPNDKPFQNVNKITYGACPKYVKQSTLKLATGMRNVPEKKTRGLFVAIAGFIENGWEGMIDCWYGFRHQNSEGTGQAADLKSTQAAIDQINGKLNRVIEKTNEKFHQIEKEFSEVEGRIQDLENYVEDTKIDLWSYNAELLVALENQHTIDLTDSEMNKLFERTRRQLRENAEDMGSGCFKIYHKCDNACIESIRNGTYDHDIYRDEALNNRFQIKGVELKSGYKDWILWISFATSCFLLCVVLGGFIMWACQRGNIRCNICI.

Positions 1–16 are cleaved as a signal peptide; sequence MKTIIVLSYFFCLALS. The Extracellular portion of the chain corresponds to 17 to 530; it reads QDYSESNNST…VELKSGYKDW (514 aa). N23, N24, N38, and N54 each carry an N-linked (GlcNAc...) asparagine; by host glycan. 6 disulfides stabilise this stretch: C30/C482, C68/C293, C80/C92, C113/C155, C297/C321, and C489/C493. N-linked (GlcNAc...) asparagine; by host glycans are attached at residues N181 and N301. N-linked (GlcNAc...) asparagine; by host glycosylation occurs at N499. A helical membrane pass occupies residues 531–551; that stretch reads ILWISFATSCFLLCVVLGGFI. At 552 to 566 the chain is on the cytoplasmic side; that stretch reads MWACQRGNIRCNICI. S-palmitoyl cysteine; by host attachment occurs at residues C555, C562, and C565.

It belongs to the influenza viruses hemagglutinin family. In terms of assembly, homotrimer of disulfide-linked HA1-HA2. Post-translationally, palmitoylated. In terms of processing, in natural infection, inactive HA is matured into HA1 and HA2 outside the cell by one or more trypsin-like, arginine-specific endoprotease secreted by the bronchial epithelial cells. One identified protease that may be involved in this process is secreted in lungs by club cells.

It localises to the virion membrane. The protein localises to the host apical cell membrane. Its function is as follows. Binds to sialic acid-containing receptors on the cell surface, bringing about the attachment of the virus particle to the cell. This attachment induces virion internalization of about two third of the virus particles through clathrin-dependent endocytosis and about one third through a clathrin- and caveolin-independent pathway. Plays a major role in the determination of host range restriction and virulence. Class I viral fusion protein. Responsible for penetration of the virus into the cell cytoplasm by mediating the fusion of the membrane of the endocytosed virus particle with the endosomal membrane. Low pH in endosomes induces an irreversible conformational change in HA2, releasing the fusion hydrophobic peptide. Several trimers are required to form a competent fusion pore. Functionally, binds to sialic acid-containing receptors on the cell surface, bringing about the attachment of the virus particle to the cell. This attachment induces virion internalization either through clathrin-dependent endocytosis or through clathrin- and caveolin-independent pathway. Plays a major role in the determination of host range restriction and virulence. Class I viral fusion protein. Responsible for penetration of the virus into the cell cytoplasm by mediating the fusion of the membrane of the endocytosed virus particle with the endosomal membrane. Low pH in endosomes induces an irreversible conformational change in HA2, releasing the fusion hydrophobic peptide. Several trimers are required to form a competent fusion pore. In Influenza A virus (strain A/Duck/Memphis/928/1974 H3N8), this protein is Hemagglutinin.